The chain runs to 92 residues: Co-chaperonin GroES (92 aa).

Belongs to the GroES chaperonin family. In terms of assembly, heptamer of 7 subunits arranged in a ring. Interacts with the chaperonin GroEL.

Its subcellular location is the cytoplasm. In terms of biological role, together with the chaperonin GroEL, plays an essential role in assisting protein folding. The GroEL-GroES system forms a nano-cage that allows encapsulation of the non-native substrate proteins and provides a physical environment optimized to promote and accelerate protein folding. GroES binds to the apical surface of the GroEL ring, thereby capping the opening of the GroEL channel. This chain is Co-chaperonin GroES, found in Thermotoga maritima (strain ATCC 43589 / DSM 3109 / JCM 10099 / NBRC 100826 / MSB8).